We begin with the raw amino-acid sequence, 743 residues long: 1,4-alpha-glucan branching enzyme GlgB 2 (743 aa).

The segment at 1-23 (MSERQGGQEQRTEADGMTTEGIS) is disordered. Residue Asp422 is the Nucleophile of the active site. The Proton donor role is filled by Glu475.

It belongs to the glycosyl hydrolase 13 family. GlgB subfamily. As to quaternary structure, monomer.

It carries out the reaction Transfers a segment of a (1-&gt;4)-alpha-D-glucan chain to a primary hydroxy group in a similar glucan chain.. It participates in glycan biosynthesis; glycogen biosynthesis. Its function is as follows. Catalyzes the formation of the alpha-1,6-glucosidic linkages in glycogen by scission of a 1,4-alpha-linked oligosaccharide from growing alpha-1,4-glucan chains and the subsequent attachment of the oligosaccharide to the alpha-1,6 position. The protein is 1,4-alpha-glucan branching enzyme GlgB 2 of Xanthomonas euvesicatoria pv. vesicatoria (strain 85-10) (Xanthomonas campestris pv. vesicatoria).